A 188-amino-acid polypeptide reads, in one-letter code: UPF0301 protein Cag_1601 (188 aa).

Belongs to the UPF0301 (AlgH) family.

In Chlorobium chlorochromatii (strain CaD3), this protein is UPF0301 protein Cag_1601.